The sequence spans 151 residues: Ribonuclease P protein component (151 aa).

The tract at residues 1 to 62 (MDEKDLATQP…LKGDSAFRRL (62 aa)) is disordered. Low complexity predominate over residues 28-48 (GAQGAEAQAAEGPLAAHAQGA).

This sequence belongs to the RnpA family. In terms of assembly, consists of a catalytic RNA component (M1 or rnpB) and a protein subunit.

The enzyme catalyses Endonucleolytic cleavage of RNA, removing 5'-extranucleotides from tRNA precursor.. Functionally, RNaseP catalyzes the removal of the 5'-leader sequence from pre-tRNA to produce the mature 5'-terminus. It can also cleave other RNA substrates such as 4.5S RNA. The protein component plays an auxiliary but essential role in vivo by binding to the 5'-leader sequence and broadening the substrate specificity of the ribozyme. This is Ribonuclease P protein component from Thermus oshimai.